Consider the following 320-residue polypeptide: Foldase protein PrsA (320 aa).

The signal sequence occupies residues 1-20 (MKMINKLIVPVTASALLLGA). A lipid anchor (N-palmitoyl cysteine) is attached at Cys-21. Cys-21 carries the S-diacylglycerol cysteine lipid modification. Residues 139–245 (EDSKKASHIL…FGYHIIKADK (107 aa)) enclose the PpiC domain. Residues 159-198 (EGLDDKEAKQKAEEIQKEVSKDPSKFGEIAKKESMDTGSA) are disordered.

It belongs to the PrsA family.

The protein localises to the cell membrane. It carries out the reaction [protein]-peptidylproline (omega=180) = [protein]-peptidylproline (omega=0). Its function is as follows. Plays a major role in protein secretion by helping the post-translocational extracellular folding of several secreted proteins. The sequence is that of Foldase protein PrsA from Staphylococcus aureus (strain Mu3 / ATCC 700698).